We begin with the raw amino-acid sequence, 179 residues long: Large ribosomal subunit protein uL6 (179 aa).

Belongs to the universal ribosomal protein uL6 family. Part of the 50S ribosomal subunit.

In terms of biological role, this protein binds to the 23S rRNA, and is important in its secondary structure. It is located near the subunit interface in the base of the L7/L12 stalk, and near the tRNA binding site of the peptidyltransferase center. The chain is Large ribosomal subunit protein uL6 from Clostridium perfringens (strain ATCC 13124 / DSM 756 / JCM 1290 / NCIMB 6125 / NCTC 8237 / Type A).